Consider the following 181-residue polypeptide: Ribonuclease HII (181 aa).

The region spanning 1-181 (MICGIDEVGR…SLHRKNFKLI (181 aa)) is the RNase H type-2 domain. Aspartate 6, glutamate 7, and aspartate 98 together coordinate a divalent metal cation.

Belongs to the RNase HII family. Requires Mn(2+) as cofactor. The cofactor is Mg(2+).

Its subcellular location is the cytoplasm. It carries out the reaction Endonucleolytic cleavage to 5'-phosphomonoester.. Endonuclease that specifically degrades the RNA of RNA-DNA hybrids. This is Ribonuclease HII from Borreliella afzelii (strain PKo) (Borrelia afzelii).